The primary structure comprises 625 residues: tRNA uridine 5-carboxymethylaminomethyl modification enzyme MnmG (625 aa).

FAD is bound by residues 16–21 (GGGHAG), isoleucine 128, and serine 183. Residue 275–289 (GPRYCPSIEDKVVRF) coordinates NAD(+). Glutamine 372 contributes to the FAD binding site.

The protein belongs to the MnmG family. In terms of assembly, homodimer. Heterotetramer of two MnmE and two MnmG subunits. It depends on FAD as a cofactor.

It is found in the cytoplasm. Its function is as follows. NAD-binding protein involved in the addition of a carboxymethylaminomethyl (cmnm) group at the wobble position (U34) of certain tRNAs, forming tRNA-cmnm(5)s(2)U34. The chain is tRNA uridine 5-carboxymethylaminomethyl modification enzyme MnmG from Protochlamydia amoebophila (strain UWE25).